Here is an 87-residue protein sequence, read N- to C-terminus: UPF0250 protein Ent638_1166 (87 aa).

This sequence belongs to the UPF0250 family.

In Enterobacter sp. (strain 638), this protein is UPF0250 protein Ent638_1166.